The sequence spans 646 residues: Depudecin biosynthesis cluster-specific transcription activator DEP6 (646 aa).

A DNA-binding region (zn(2)-C6 fungal-type) is located at residues 16–43 (CEICRERKVRCDRALPKCRRCDRLNQPC). Disordered stretches follow at residues 76–130 (TTAA…SQSQ) and 345–366 (KSEHSQGMQNRETQSGPRLALP). Over residues 349-360 (SQGMQNRETQSG) the composition is skewed to polar residues.

It is found in the nucleus. In terms of biological role, transcription factor that positively regulates the expression of the gene cluster that mediates the biosynthesis of depudecin, a highly oxidized eleven-carbon linear polyketide that acts as a histone deacetylase (HDAC) inhibitor and makes a small contribution to pathogenesis. In Alternaria brassicicola (Dark leaf spot agent), this protein is Depudecin biosynthesis cluster-specific transcription activator DEP6.